Here is a 323-residue protein sequence, read N- to C-terminus: MIFSTFEHILTHISFSVISIVITIQLITLLINETVGLYVSSEKGMIATFFCITGLLVTRWIYLRHLPLSDLYESLLFLSWAFSIIHLFTYFKKYKNHLSVSAITAPSTIFTQGFATSGFLTEMHQSPLLVPALQSHWLMMHVSMMVLGYAALLCGSLFSVALIVITFQKAIRIFCKNNNLLNALFSFNEIQYINEGNYFVRNTSFFSSKNYYKSQLIQQLDHWSYRIISLGFIFLSIGILSGAVWANETWGSYWNWDPKETWAFITWTIFAIYLHTRTNKNFEGVNSAIVASMGFLIIWICYFGVNLLGIGLHSYGSFTLTSN.

8 helical membrane passes run I9–L29, L37–V57, L71–F91, V100–L120, M145–I165, I227–N247, T261–H275, and A288–L308.

Belongs to the CcmF/CycK/Ccl1/NrfE/CcsA family. May interact with Ccs1.

The protein localises to the plastid. The protein resides in the chloroplast thylakoid membrane. Required during biogenesis of c-type cytochromes (cytochrome c6 and cytochrome f) at the step of heme attachment. This Cucumis sativus (Cucumber) protein is Cytochrome c biogenesis protein CcsA.